A 317-amino-acid polypeptide reads, in one-letter code: Aspartate carbamoyltransferase catalytic subunit (317 aa).

Arginine 64 and threonine 65 together coordinate carbamoyl phosphate. L-aspartate is bound at residue lysine 92. 3 residues coordinate carbamoyl phosphate: arginine 114, histidine 142, and glutamine 145. Residues arginine 176 and arginine 230 each coordinate L-aspartate. Glycine 271 and proline 272 together coordinate carbamoyl phosphate.

The protein belongs to the aspartate/ornithine carbamoyltransferase superfamily. ATCase family. In terms of assembly, heterododecamer (2C3:3R2) of six catalytic PyrB chains organized as two trimers (C3), and six regulatory PyrI chains organized as three dimers (R2).

It carries out the reaction carbamoyl phosphate + L-aspartate = N-carbamoyl-L-aspartate + phosphate + H(+). It functions in the pathway pyrimidine metabolism; UMP biosynthesis via de novo pathway; (S)-dihydroorotate from bicarbonate: step 2/3. Catalyzes the condensation of carbamoyl phosphate and aspartate to form carbamoyl aspartate and inorganic phosphate, the committed step in the de novo pyrimidine nucleotide biosynthesis pathway. This Nitratidesulfovibrio vulgaris (strain ATCC 29579 / DSM 644 / CCUG 34227 / NCIMB 8303 / VKM B-1760 / Hildenborough) (Desulfovibrio vulgaris) protein is Aspartate carbamoyltransferase catalytic subunit.